A 215-amino-acid chain; its full sequence is Serine acetyltransferase (215 aa).

Belongs to the transferase hexapeptide repeat family.

The protein localises to the cytoplasm. It catalyses the reaction L-serine + acetyl-CoA = O-acetyl-L-serine + CoA. Its pathway is amino-acid biosynthesis; L-cysteine biosynthesis; L-cysteine from L-serine: step 1/2. This is Serine acetyltransferase (cysE) from Staphylococcus aureus (strain MRSA252).